A 501-amino-acid polypeptide reads, in one-letter code: Ribose import ATP-binding protein RbsA (501 aa).

ABC transporter domains lie at 8-245 and 255-500; these read LKMV…VGRT and VKKG…VGIN. Residue 40–47 coordinates ATP; that stretch reads GENGAGKS.

This sequence belongs to the ABC transporter superfamily. Ribose importer (TC 3.A.1.2.1) family. In terms of assembly, the complex is composed of an ATP-binding protein (RbsA), two transmembrane proteins (RbsC) and a solute-binding protein (RbsB).

The protein localises to the cell membrane. The enzyme catalyses D-ribose(out) + ATP + H2O = D-ribose(in) + ADP + phosphate + H(+). Part of the ABC transporter complex RbsABC involved in ribose import. Responsible for energy coupling to the transport system. This is Ribose import ATP-binding protein RbsA from Clostridium perfringens (strain 13 / Type A).